Here is a 932-residue protein sequence, read N- to C-terminus: DNA mismatch repair protein MutS (932 aa).

615-622 (GPNMAGKS) serves as a coordination point for ATP.

Belongs to the DNA mismatch repair MutS family.

Functionally, this protein is involved in the repair of mismatches in DNA. It is possible that it carries out the mismatch recognition step. This protein has a weak ATPase activity. The protein is DNA mismatch repair protein MutS of Clostridium botulinum (strain Loch Maree / Type A3).